The primary structure comprises 176 residues: Translation initiation factor IF-3 (176 aa).

The protein belongs to the IF-3 family. In terms of assembly, monomer.

Its subcellular location is the cytoplasm. In terms of biological role, IF-3 binds to the 30S ribosomal subunit and shifts the equilibrium between 70S ribosomes and their 50S and 30S subunits in favor of the free subunits, thus enhancing the availability of 30S subunits on which protein synthesis initiation begins. This Streptococcus uberis (strain ATCC BAA-854 / 0140J) protein is Translation initiation factor IF-3.